The sequence spans 75 residues: ATP synthase subunit c (75 aa).

Helical transmembrane passes span 13–33 and 54–74; these read LNVVGYGLAAIGPGIGLGILI and MFLGLAFVEVLALLGFVLAFI.

The protein belongs to the ATPase C chain family. In terms of assembly, F-type ATPases have 2 components, F(1) - the catalytic core - and F(0) - the membrane proton channel. F(1) has five subunits: alpha(3), beta(3), gamma(1), delta(1), epsilon(1). F(0) has three main subunits: a(1), b(2) and c(10-14). The alpha and beta chains form an alternating ring which encloses part of the gamma chain. F(1) is attached to F(0) by a central stalk formed by the gamma and epsilon chains, while a peripheral stalk is formed by the delta and b chains.

The protein localises to the cell membrane. Its function is as follows. F(1)F(0) ATP synthase produces ATP from ADP in the presence of a proton or sodium gradient. F-type ATPases consist of two structural domains, F(1) containing the extramembraneous catalytic core and F(0) containing the membrane proton channel, linked together by a central stalk and a peripheral stalk. During catalysis, ATP synthesis in the catalytic domain of F(1) is coupled via a rotary mechanism of the central stalk subunits to proton translocation. Key component of the F(0) channel; it plays a direct role in translocation across the membrane. A homomeric c-ring of between 10-14 subunits forms the central stalk rotor element with the F(1) delta and epsilon subunits. In Bifidobacterium adolescentis (strain ATCC 15703 / DSM 20083 / NCTC 11814 / E194a), this protein is ATP synthase subunit c.